The chain runs to 385 residues: Flap endonuclease 1 (385 aa).

The tract at residues 1–104 (MGILGLSKLI…GELAKRAERR (104 aa)) is N-domain. Asp-34 contacts Mg(2+). 2 residues coordinate DNA: Arg-47 and Arg-70. The Mg(2+) site is built by Asp-86, Glu-158, Glu-160, Asp-179, and Asp-181. The tract at residues 122 to 253 (GIEKFNRRLV…KRAIELINTY (132 aa)) is I-domain. Glu-158 serves as a coordination point for DNA. The DNA site is built by Gly-231 and Asp-233. Asp-233 provides a ligand contact to Mg(2+). The tract at residues 336–344 (TQVRLDSFF) is interaction with PCNA. The disordered stretch occupies residues 346–385 (TLPSTPNATNAAKRKADEAKKSANNKKAKTSGGGRGRRPK). Residues 368–385 (ANNKKAKTSGGGRGRRPK) are compositionally biased toward basic residues.

It belongs to the XPG/RAD2 endonuclease family. FEN1 subfamily. In terms of assembly, interacts with PCNA. Three molecules of FEN1 bind to one PCNA trimer with each molecule binding to one PCNA monomer. PCNA stimulates the nuclease activity without altering cleavage specificity. It depends on Mg(2+) as a cofactor. In terms of processing, phosphorylated. Phosphorylation upon DNA damage induces relocalization to the nuclear plasma.

It is found in the nucleus. It localises to the nucleolus. The protein localises to the nucleoplasm. Its subcellular location is the mitochondrion. Structure-specific nuclease with 5'-flap endonuclease and 5'-3' exonuclease activities involved in DNA replication and repair. During DNA replication, cleaves the 5'-overhanging flap structure that is generated by displacement synthesis when DNA polymerase encounters the 5'-end of a downstream Okazaki fragment. It enters the flap from the 5'-end and then tracks to cleave the flap base, leaving a nick for ligation. Also involved in the long patch base excision repair (LP-BER) pathway, by cleaving within the apurinic/apyrimidinic (AP) site-terminated flap. Acts as a genome stabilization factor that prevents flaps from equilibrating into structures that lead to duplications and deletions. Also possesses 5'-3' exonuclease activity on nicked or gapped double-stranded DNA, and exhibits RNase H activity. Also involved in replication and repair of rDNA and in repairing mitochondrial DNA. This chain is Flap endonuclease 1, found in Drosophila sechellia (Fruit fly).